A 193-amino-acid polypeptide reads, in one-letter code: Acyl carrier protein phosphodiesterase (193 aa).

It belongs to the AcpH family.

It catalyses the reaction holo-[ACP] + H2O = apo-[ACP] + (R)-4'-phosphopantetheine + H(+). Its function is as follows. Converts holo-ACP to apo-ACP by hydrolytic cleavage of the phosphopantetheine prosthetic group from ACP. This is Acyl carrier protein phosphodiesterase from Escherichia coli O157:H7.